A 376-amino-acid chain; its full sequence is Serine-arginine protein 55 (376 aa).

The region spanning 4-74 is the RRM 1 domain; sequence SRVYVGGLPY…ERVVVEPARG (71 aa). A disordered region spans residues 73 to 114; sequence RGTARGSNRDRYDDRYGGRRGGGGGRYNEKNKNSRSSSRYGP. The segment covering 79-89 has biased composition (basic and acidic residues); the sequence is SNRDRYDDRYG. The 74-residue stretch at 120-193 folds into the RRM 2 domain; that stretch reads YRLIVENLSS…RRIHLVEDRR (74 aa). S165 is subject to Phosphoserine. The segment covering 185-194 has biased composition (basic and acidic residues); sequence RIHLVEDRRG. Positions 185–376 are disordered; that stretch reads RIHLVEDRRG…PDRNNESMDD (192 aa). A compositionally biased stretch (gly residues) spans 196–205; sequence RSGGGGGSGR. Composition is skewed to basic residues over residues 215–263 and 271–283; these read SRSR…SRSN and SKSK…RSRS. Residues 284-304 are compositionally biased toward basic and acidic residues; the sequence is PKRERDSRSRSRSVSKRESRS.

Belongs to the splicing factor SR family. Post-translationally, extensively phosphorylated on serine residues in the RS domain.

The protein localises to the nucleus. Essential for development. May have a critical role in splicing or in controlling alternative splice site use of at least some pre-mRNA in vivo. Not required for all splicing. May play a general role in the condensation or decondensation of chromatin. This is Serine-arginine protein 55 (B52) from Drosophila melanogaster (Fruit fly).